We begin with the raw amino-acid sequence, 317 residues long: Glycine--tRNA ligase alpha subunit (317 aa).

The protein belongs to the class-II aminoacyl-tRNA synthetase family. As to quaternary structure, tetramer of two alpha and two beta subunits.

Its subcellular location is the cytoplasm. It carries out the reaction tRNA(Gly) + glycine + ATP = glycyl-tRNA(Gly) + AMP + diphosphate. This Lactococcus lactis subsp. cremoris (strain SK11) protein is Glycine--tRNA ligase alpha subunit.